A 197-amino-acid chain; its full sequence is Peptide deformylase (197 aa).

Fe cation-binding residues include Cys106 and His148. Residue Glu149 is part of the active site. His152 contributes to the Fe cation binding site.

It belongs to the polypeptide deformylase family. Requires Fe(2+) as cofactor.

It carries out the reaction N-terminal N-formyl-L-methionyl-[peptide] + H2O = N-terminal L-methionyl-[peptide] + formate. Removes the formyl group from the N-terminal Met of newly synthesized proteins. Requires at least a dipeptide for an efficient rate of reaction. N-terminal L-methionine is a prerequisite for activity but the enzyme has broad specificity at other positions. The polypeptide is Peptide deformylase (Mycolicibacterium vanbaalenii (strain DSM 7251 / JCM 13017 / BCRC 16820 / KCTC 9966 / NRRL B-24157 / PYR-1) (Mycobacterium vanbaalenii)).